A 93-amino-acid polypeptide reads, in one-letter code: MPRSLKKGPFVDDHLQAKVDVQNEKGTKQVIKTWSRRSTITPDFIGHTFAVHDGRKHVPVFVSENMVGHKLGEFAPTRTFKSHVKEDRKSKRR.

The protein belongs to the universal ribosomal protein uS19 family.

Functionally, protein S19 forms a complex with S13 that binds strongly to the 16S ribosomal RNA. In Nocardia farcinica (strain IFM 10152), this protein is Small ribosomal subunit protein uS19.